The following is a 406-amino-acid chain: Tryptophan synthase beta chain (406 aa).

N6-(pyridoxal phosphate)lysine is present on K99.

This sequence belongs to the TrpB family. Tetramer of two alpha and two beta chains. Pyridoxal 5'-phosphate is required as a cofactor.

It catalyses the reaction (1S,2R)-1-C-(indol-3-yl)glycerol 3-phosphate + L-serine = D-glyceraldehyde 3-phosphate + L-tryptophan + H2O. It functions in the pathway amino-acid biosynthesis; L-tryptophan biosynthesis; L-tryptophan from chorismate: step 5/5. In terms of biological role, the beta subunit is responsible for the synthesis of L-tryptophan from indole and L-serine. The protein is Tryptophan synthase beta chain of Sinorhizobium fredii (strain NBRC 101917 / NGR234).